We begin with the raw amino-acid sequence, 332 residues long: Beta-hexosaminidase (332 aa).

Substrate-binding positions include aspartate 62, arginine 70, arginine 131, and lysine 161–histidine 162. Histidine 174 acts as the Proton donor/acceptor in catalysis. Residue aspartate 244 is the Nucleophile of the active site.

The protein belongs to the glycosyl hydrolase 3 family. NagZ subfamily.

It is found in the cytoplasm. The catalysed reaction is Hydrolysis of terminal non-reducing N-acetyl-D-hexosamine residues in N-acetyl-beta-D-hexosaminides.. It functions in the pathway cell wall biogenesis; peptidoglycan recycling. Its function is as follows. Plays a role in peptidoglycan recycling by cleaving the terminal beta-1,4-linked N-acetylglucosamine (GlcNAc) from peptide-linked peptidoglycan fragments, giving rise to free GlcNAc, anhydro-N-acetylmuramic acid and anhydro-N-acetylmuramic acid-linked peptides. In Pseudomonas aeruginosa (strain LESB58), this protein is Beta-hexosaminidase.